Consider the following 121-residue polypeptide: Large ribosomal subunit protein bL12 (121 aa).

This sequence belongs to the bacterial ribosomal protein bL12 family. As to quaternary structure, homodimer. Part of the ribosomal stalk of the 50S ribosomal subunit. Forms a multimeric L10(L12)X complex, where L10 forms an elongated spine to which 2 to 4 L12 dimers bind in a sequential fashion. Binds GTP-bound translation factors.

Its function is as follows. Forms part of the ribosomal stalk which helps the ribosome interact with GTP-bound translation factors. Is thus essential for accurate translation. This Clostridium perfringens (strain ATCC 13124 / DSM 756 / JCM 1290 / NCIMB 6125 / NCTC 8237 / Type A) protein is Large ribosomal subunit protein bL12.